The following is a 211-amino-acid chain: tRNA (guanine-N(7)-)-methyltransferase (211 aa).

Residues aspartate 40, glutamate 65, asparagine 92, and aspartate 117 each contribute to the S-adenosyl-L-methionine site. The active site involves aspartate 117. Lysine 121 is a substrate binding site. Residues 123–128 (RHNKRR) are interaction with RNA. Residue aspartate 153 participates in substrate binding.

Belongs to the class I-like SAM-binding methyltransferase superfamily. TrmB family.

The enzyme catalyses guanosine(46) in tRNA + S-adenosyl-L-methionine = N(7)-methylguanosine(46) in tRNA + S-adenosyl-L-homocysteine. It functions in the pathway tRNA modification; N(7)-methylguanine-tRNA biosynthesis. In terms of biological role, catalyzes the formation of N(7)-methylguanine at position 46 (m7G46) in tRNA. This Synechocystis sp. (strain ATCC 27184 / PCC 6803 / Kazusa) protein is tRNA (guanine-N(7)-)-methyltransferase.